We begin with the raw amino-acid sequence, 101 residues long: Cilia- and flagella-associated protein 141 (101 aa).

In terms of assembly, microtubule inner protein component of sperm flagellar doublet microtubules. As to expression, expressed in trachea multiciliated cells.

Its subcellular location is the cytoplasm. It localises to the cytoskeleton. The protein localises to the cilium axoneme. It is found in the flagellum axoneme. Microtubule inner protein (MIP) part of the dynein-decorated doublet microtubules (DMTs) in cilia axoneme, which is required for motile cilia beating. The protein is Cilia- and flagella-associated protein 141 of Bos taurus (Bovine).